We begin with the raw amino-acid sequence, 1131 residues long: MRSRSSNAEGSAPKQIPRHSKFQDSIQDMKHRTHKKDPSCESEGVLPRPVSEKSHTGKGHHTEDLSRDDLLFLLSILEGELQARDEVIGILRAEKIDLALLEAQYGFVTPKKVLEALQRDAFQAKSAPWQEDIYEKPMNELDKVVEKHKESHRRILEQLLMVERSHRQTIMEMEEEKRKHKEYMKKSDEFINLLEQECERLKKLIDQETASQEKKEQEKEKRIKTLKEELTKLKSFALMVVDEQQRLTAQLALQRQKIQALTTSAKETQGKLALAEARAQEEEQKATRLEKELQTQTTEFHQNQDKIMAKLTNEDSQNRQLRQKLAALSRQIDELEETNRSLRKAEEELQDIKDKINKGEYGNSGIMDEVDELRKRVLDMEGKDEELIKMEEQCRDLNKRLEKETVQSKDFKLEVDKLSVRITALEKLEDALDKSKQECYSLKCNLEKEKMTTKQLSEELESLNARIKELEAIESRLEKTEITLKDDLTKLKTLTVMLVDERKTMSEKLKQTEDKLQSTTSQLQAEQNKVTTVTEKLIEETKRALKSKTDAEEKMYSVTKERDDLRNKLKAEEEKGHDLLSKVTILKNRLQSLEAIEKDFVKNKLNQDSSKSTAALHQENNKIKELSQEVENLKLKLKDMKAIEDDLMKTEDEYETLERRYANERDKAQFLSQELEHAKMELAKYKLAEKTESSHEQWLFRRLQEEEAKSGHLSREVDALKEKIHEYMATEDLICHLQGDHSLLQKKLNQQENRNRDLGREIENLTKELERYRHFSKSLRPSLNGRRISDPQVFSKEVQTEAADSEPPDYKSLIPLERAVINGQFYEENEDQDDDPNEEESVLSFRCSQSSSLPMNRKLWIPWMKSKEGHPQNGKIQTKSNGNFVQPGDLVLSHTPGQPLHIKVTPDHIQNTATLEITSPTTESPHSYTSTAVIPNCGTPKQRITILQNASITPIKSKSSTESLMNLEQSMSPVTMATFARAQTPESCGSVTPERTMSPIQVLAMTGSPSSPEQGCSPEPIEISAKHAIFRVSPDRQSSWQFQRSNSNSSSVITTEDNKIHIHLGSPYMQAVAGPMRPASPSAPLQDNRTQGLTNGALNKTTNKVTSSITITPTATPLPRQSQITVSNIYN.

A disordered region spans residues 1–62 (MRSRSSNAEG…KSHTGKGHHT (62 aa)). Basic and acidic residues predominate over residues 50 to 62 (VSEKSHTGKGHHT). Coiled coils occupy residues 139–583 (NELD…LSKV) and 610–780 (SKST…KSLR). Ser-789 carries the phosphoserine modification. A phosphothreonine mark is found at Thr-984 and Thr-992. Ser-1050 is subject to Phosphoserine.

The protein belongs to the FILIP1 family.

Its subcellular location is the cytoplasm. The protein resides in the membrane. It localises to the nucleus. Functionally, acts as a regulator of the antiangiogenic activity on endothelial cells. When overexpressed in endothelial cells, leads to inhibition of cell proliferation and migration and an increase in apoptosis. Inhibits melanoma growth When expressed in tumor-associated vasculature. This chain is Filamin A-interacting protein 1-like (Filip1l), found in Mus musculus (Mouse).